A 192-amino-acid polypeptide reads, in one-letter code: Flavin prenyltransferase UbiX (192 aa).

Residues 10 to 12 (GAS), Ser-36, 92 to 95 (SVAT), and Arg-127 each bind FMN. The dimethylallyl phosphate site is built by Tyr-157 and Lys-173.

This sequence belongs to the UbiX/PAD1 family.

It catalyses the reaction dimethylallyl phosphate + FMNH2 = prenylated FMNH2 + phosphate. Flavin prenyltransferase that catalyzes the synthesis of the prenylated FMN cofactor (prenyl-FMN) for 4-hydroxy-3-polyprenylbenzoic acid decarboxylase UbiD. The prenyltransferase is metal-independent and links a dimethylallyl moiety from dimethylallyl monophosphate (DMAP) to the flavin N5 and C6 atoms of FMN. This is Flavin prenyltransferase UbiX from Chlamydia trachomatis serovar D (strain ATCC VR-885 / DSM 19411 / UW-3/Cx).